A 406-amino-acid polypeptide reads, in one-letter code: MANVYDILLERGYIKQITHEDEVRELLGKEKVTFYIGFDPTADSLHIGHFLQMMVMSHMQKAGHKPIALLGGGTAMIGDPTGKTDMRKMLSREQIQHNADCFKKQFSKFIDFEDEKAIMANNADWLMNLNYVNFLREIGVHFSVNKMLTAECFKQRMEKGLTFLEFNYMLMQGYDFLELNRRYGCTFQMGGDDQWANIIAGVNLIRKKERKPAFGMTFTLLTKSDGKKMGKTEGGAIWLDKEKTSPYDFYQYWRNVDDADVEKCLLLLTFLPMDEVKRLSSLPGEKINEAKKVLAYEVTKIIHGEKEAQMAKEAAEALFSGGESLNNVPTIELDESSLGCSVVELLVDIHILPSKSEARRLIKQNGLTINGEKVTDSELKVTKDHFKNGELLIRRGKKNYNRIIIK.

Residue tyrosine 35 participates in L-tyrosine binding. A 'HIGH' region motif is present at residues 40–49 (PTADSLHIGH). L-tyrosine is bound by residues tyrosine 168 and glutamine 172. Positions 228–232 (KMGKT) match the 'KMSKS' region motif. Position 231 (lysine 231) interacts with ATP. The region spanning 340-406 (CSVVELLVDI…KKNYNRIIIK (67 aa)) is the S4 RNA-binding domain.

The protein belongs to the class-I aminoacyl-tRNA synthetase family. TyrS type 1 subfamily. As to quaternary structure, homodimer.

It localises to the cytoplasm. It carries out the reaction tRNA(Tyr) + L-tyrosine + ATP = L-tyrosyl-tRNA(Tyr) + AMP + diphosphate + H(+). In terms of biological role, catalyzes the attachment of tyrosine to tRNA(Tyr) in a two-step reaction: tyrosine is first activated by ATP to form Tyr-AMP and then transferred to the acceptor end of tRNA(Tyr). The protein is Tyrosine--tRNA ligase of Clostridium kluyveri (strain NBRC 12016).